A 462-amino-acid polypeptide reads, in one-letter code: Cytochrome c biogenesis protein CcsB (462 aa).

The next 3 membrane-spanning stretches (helical) occupy residues 30–50 (LRVA…GTVI), 89–109 (TWWY…CTFR), and 175–195 (IGPI…IWGA).

This sequence belongs to the Ccs1/CcsB family. In terms of assembly, may interact with CcsA.

The protein resides in the cellular thylakoid membrane. Required during biogenesis of c-type cytochromes (cytochrome c6 and cytochrome f) at the step of heme attachment. The sequence is that of Cytochrome c biogenesis protein CcsB from Picosynechococcus sp. (strain ATCC 27264 / PCC 7002 / PR-6) (Agmenellum quadruplicatum).